The following is a 363-amino-acid chain: Histidine biosynthesis bifunctional protein HisB (363 aa).

Residues methionine 1 to proline 174 form a histidinol-phosphatase region. The active-site Nucleophile is the aspartate 9. Mg(2+)-binding residues include aspartate 9 and aspartate 11. The Proton donor role is filled by aspartate 11. Residues cysteine 92, histidine 94, cysteine 100, and cysteine 102 each coordinate Zn(2+). Aspartate 129 is a Mg(2+) binding site. Positions arginine 175–leucine 363 are imidazoleglycerol-phosphate dehydratase.

In the N-terminal section; belongs to the histidinol-phosphatase family. This sequence in the C-terminal section; belongs to the imidazoleglycerol-phosphate dehydratase family. Requires Mg(2+) as cofactor. Zn(2+) is required as a cofactor.

The protein localises to the cytoplasm. The catalysed reaction is D-erythro-1-(imidazol-4-yl)glycerol 3-phosphate = 3-(imidazol-4-yl)-2-oxopropyl phosphate + H2O. It catalyses the reaction L-histidinol phosphate + H2O = L-histidinol + phosphate. It functions in the pathway amino-acid biosynthesis; L-histidine biosynthesis; L-histidine from 5-phospho-alpha-D-ribose 1-diphosphate: step 6/9. Its pathway is amino-acid biosynthesis; L-histidine biosynthesis; L-histidine from 5-phospho-alpha-D-ribose 1-diphosphate: step 8/9. In Actinobacillus pleuropneumoniae serotype 5b (strain L20), this protein is Histidine biosynthesis bifunctional protein HisB.